The following is a 383-amino-acid chain: Neuropeptide Y receptor type 1 (383 aa).

At 1-44 (MNSTSFSQVENHSIYYNFSEKNSRFLAFENDDCHLPLAMIFTLA) the chain is on the extracellular side. Residues N2, N11, and N17 are each glycosylated (N-linked (GlcNAc...) asparagine). Residues 45–65 (LAYGAVIILGVSGNLALIIII) traverse the membrane as a helical segment. Residues 66 to 76 (LKQKEMRNVTN) lie on the Cytoplasmic side of the membrane. Residues 77-97 (ILIVNLSFSDLLVAIMCLPFT) traverse the membrane as a helical segment. Residues 98–116 (FVYTLMDHWVFGEAMCKLN) lie on the Extracellular side of the membrane. C113 and C198 are oxidised to a cystine. Residues 117-137 (PFVQCVSITVSIFSLVLIAVE) form a helical membrane-spanning segment. Over 138–154 (RHQLIINPRGWRPNNRH) the chain is Cytoplasmic. Residues 155-175 (AYVGIAVIWVLAVASSLPFLI) traverse the membrane as a helical segment. The Extracellular segment spans residues 176–211 (YQVLTDEPFQNVTLDAFKDKYVCFDKFPSDSHRLSY). N-linked (GlcNAc...) asparagine glycosylation occurs at N186. The chain crosses the membrane as a helical span at residues 212 to 232 (TTLLLVLQYFGPLCFIFICYF). The Cytoplasmic segment spans residues 233 to 260 (KIYVRLKRRNSMMDKMRDNKYRSSEAKR). Residues 261-281 (INIMLLSIVVAFAVCWLPLTI) traverse the membrane as a helical segment. At 282–299 (FNTVFDWDHQIIATCNHN) the chain is on the extracellular side. Residues 300 to 320 (LLFLLCHLTAMISTCVNPIFY) traverse the membrane as a helical segment. The Cytoplasmic portion of the chain corresponds to 321 to 383 (GFLNKNFQRD…KIHTDDNEKI (63 aa)). A lipid anchor (S-palmitoyl cysteine) is attached at C338. S368 carries the post-translational modification Phosphoserine.

The protein belongs to the G-protein coupled receptor 1 family.

The protein localises to the cell membrane. Functionally, receptor for neuropeptide Y and peptide YY. This Bos taurus (Bovine) protein is Neuropeptide Y receptor type 1 (NPY1R).